A 575-amino-acid chain; its full sequence is Alpha-(1,6)-fucosyltransferase (575 aa).

Over Met1 to Arg9 the chain is Cytoplasmic. The helical; Signal-anchor for type II membrane protein transmembrane segment at Trp10 to Val30 threads the bilayer. The Lumenal portion of the chain corresponds to Arg31–Lys575. 3 disulfide bridges follow: Cys204–Cys266, Cys212–Cys230, and Cys218–Cys222. The region spanning Lys206 to Leu493 is the GT23 domain. Ser278 carries the phosphoserine modification. An SH3-binding motif is present at residues Pro299–Pro305. The interval Arg365–Arg366 is important for donor substrate binding. Cys465 and Cys472 are joined by a disulfide. Positions Gln502 to Glu563 constitute an SH3 domain.

The protein belongs to the glycosyltransferase 23 family. In terms of processing, tyrosine phosphorylated by PKDCC/VLK.

It localises to the golgi apparatus. The protein localises to the golgi stack membrane. The enzyme catalyses N(4)-{beta-D-GlcNAc-(1-&gt;2)-alpha-D-Man-(1-&gt;3)-[beta-D-GlcNAc-(1-&gt;2)-alpha-D-Man-(1-&gt;6)]-beta-D-Man-(1-&gt;4)-beta-D-GlcNAc-(1-&gt;4)-beta-D-GlcNAc}-L-asparaginyl-[protein] + GDP-beta-L-fucose = an N(4)-{beta-D-GlcNAc-(1-&gt;2)-alpha-D-Man-(1-&gt;3)-[beta-D-GlcNAc-(1-&gt;2)-alpha-D-Man-(1-&gt;6)]-beta-D-Man-(1-&gt;4)-beta-D-GlcNAc-(1-&gt;4)-[alpha-L-Fuc-(1-&gt;6)]-beta-D-GlcNAc}-L-asparaginyl-[protein] + GDP + H(+). Its pathway is protein modification; protein glycosylation. Its function is as follows. Catalyzes the addition of fucose in alpha 1-6 linkage to the first GlcNAc residue, next to the peptide chains in N-glycans. In Mus musculus (Mouse), this protein is Alpha-(1,6)-fucosyltransferase (Fut8).